We begin with the raw amino-acid sequence, 529 residues long: Peptide chain release factor 3 (529 aa).

In terms of domain architecture, tr-type G spans 11–280 (AKRRTFAIIS…GLVAWAPAPM (270 aa)). GTP-binding positions include 20-27 (SHPDAGKT), 88-92 (DTPGH), and 142-145 (NKLD).

It belongs to the TRAFAC class translation factor GTPase superfamily. Classic translation factor GTPase family. PrfC subfamily.

The protein resides in the cytoplasm. Increases the formation of ribosomal termination complexes and stimulates activities of RF-1 and RF-2. It binds guanine nucleotides and has strong preference for UGA stop codons. It may interact directly with the ribosome. The stimulation of RF-1 and RF-2 is significantly reduced by GTP and GDP, but not by GMP. The polypeptide is Peptide chain release factor 3 (Salmonella gallinarum (strain 287/91 / NCTC 13346)).